The sequence spans 307 residues: Cytochrome f (307 aa).

Residues 1 to 24 form the signal peptide; it reads MKKNLFLVSVFASLFVGTANNALA. Residues tyrosine 25, cysteine 45, cysteine 48, and histidine 49 each contribute to the heme site. The chain crosses the membrane as a helical span at residues 273–293; sequence LQGLVIFLGFVLIAQVFLVLK.

The protein belongs to the cytochrome f family. The 4 large subunits of the cytochrome b6-f complex are cytochrome b6, subunit IV (17 kDa polypeptide, petD), cytochrome f and the Rieske protein, while the 4 small subunits are PetG, PetL, PetM and PetN. The complex functions as a dimer. Heme serves as cofactor.

It localises to the plastid. The protein localises to the chloroplast thylakoid membrane. Functionally, component of the cytochrome b6-f complex, which mediates electron transfer between photosystem II (PSII) and photosystem I (PSI), cyclic electron flow around PSI, and state transitions. The protein is Cytochrome f of Ostreococcus tauri.